Consider the following 576-residue polypeptide: Protein HYPER-SENSITIVITY-RELATED 4 (576 aa).

Residues 55-75 (LATAKTVLTTAASVAATAMLA) form a helical membrane-spanning segment. 306–313 (GPPGTGKS) contacts ATP. The tract at residues 508 to 532 (DKAKTEKQELENKKKTKEGTDSVVK) is disordered.

Belongs to the AAA ATPase family. BCS1 subfamily. Binds to the Yariv phenylglycoside (beta-D-Glc)(3). Mg(2+) serves as cofactor.

It localises to the membrane. The catalysed reaction is ATP + H2O = ADP + phosphate + H(+). The protein is Protein HYPER-SENSITIVITY-RELATED 4 of Arabidopsis thaliana (Mouse-ear cress).